The primary structure comprises 109 residues: Acylphosphatase (109 aa).

The 88-residue stretch at 22–109 folds into the Acylphosphatase-like domain; the sequence is RLRARVEGVV…GEFSSFDVVY (88 aa). Active-site residues include Arg37 and Asn55.

Belongs to the acylphosphatase family.

It carries out the reaction an acyl phosphate + H2O = a carboxylate + phosphate + H(+). The chain is Acylphosphatase (acyP) from Arthrobacter sp. (strain FB24).